Here is a 380-residue protein sequence, read N- to C-terminus: Cytochrome b (380 aa).

4 helical membrane-spanning segments follow: residues 34 to 54 (FGSL…LLAA), 78 to 99 (WLIR…YLHI), 114 to 134 (WNTG…GYVL), and 179 to 199 (FFAL…IHLA). H84 and H98 together coordinate heme b. Heme b is bound by residues H183 and H197. H202 lines the a ubiquinone pocket. The next 4 membrane-spanning stretches (helical) occupy residues 227 to 247 (LKDI…ALFS), 289 to 309 (LGGV…PLLH), 321 to 341 (LSQL…WIGS), and 348 to 368 (FIII…ILFP).

Belongs to the cytochrome b family. The cytochrome bc1 complex contains 11 subunits: 3 respiratory subunits (MT-CYB, CYC1 and UQCRFS1), 2 core proteins (UQCRC1 and UQCRC2) and 6 low-molecular weight proteins (UQCRH/QCR6, UQCRB/QCR7, UQCRQ/QCR8, UQCR10/QCR9, UQCR11/QCR10 and a cleavage product of UQCRFS1). This cytochrome bc1 complex then forms a dimer. The cofactor is heme b.

The protein resides in the mitochondrion inner membrane. Component of the ubiquinol-cytochrome c reductase complex (complex III or cytochrome b-c1 complex) that is part of the mitochondrial respiratory chain. The b-c1 complex mediates electron transfer from ubiquinol to cytochrome c. Contributes to the generation of a proton gradient across the mitochondrial membrane that is then used for ATP synthesis. The sequence is that of Cytochrome b (MT-CYB) from Cyrtonyx montezumae (Montezuma quail).